The primary structure comprises 213 residues: Large ribosomal subunit protein uL1 (213 aa).

It belongs to the universal ribosomal protein uL1 family. In terms of assembly, part of the 50S ribosomal subunit.

Its function is as follows. Binds directly to 23S rRNA. Probably involved in E site tRNA release. In terms of biological role, protein L1 is also a translational repressor protein, it controls the translation of its operon by binding to its mRNA. In Methanosarcina acetivorans (strain ATCC 35395 / DSM 2834 / JCM 12185 / C2A), this protein is Large ribosomal subunit protein uL1.